We begin with the raw amino-acid sequence, 200 residues long: NAD(P)H dehydrogenase (quinone) (200 aa).

Residues 4-191 enclose the Flavodoxin-like domain; it reads VLVLYYSSYG…GGARYQGALV (188 aa). Residues 10 to 15 and 79 to 81 each bind FMN; these read SSYGHI and TRF. Tyrosine 12 is a binding site for NAD(+). Position 99 (tryptophan 99) interacts with substrate. Residues 114–120 and histidine 135 contribute to the FMN site; that span reads STASQHG.

It belongs to the WrbA family. FMN is required as a cofactor.

The catalysed reaction is a quinone + NADH + H(+) = a quinol + NAD(+). It carries out the reaction a quinone + NADPH + H(+) = a quinol + NADP(+). This chain is NAD(P)H dehydrogenase (quinone), found in Rhodospirillum centenum (strain ATCC 51521 / SW).